A 398-amino-acid polypeptide reads, in one-letter code: Fatty-acid-binding protein 2 (398 aa).

Residues Arg222, Tyr235, and Ser302 each coordinate dodecanoate.

It belongs to the chalcone isomerase family. As to expression, expressed in developing cotyledons, young seedlings, roots, seeds, embryos, macrospores, preanthesis and tapetum. Restricted to developing and reproductive tissues.

The protein localises to the plastid. Its subcellular location is the chloroplast stroma. Functionally, fatty-acid-binding protein. Associates with saturated fatty acid. In Arabidopsis thaliana (Mouse-ear cress), this protein is Fatty-acid-binding protein 2 (FAP2).